The primary structure comprises 352 residues: Protein O-mannose kinase (352 aa).

Residues 1–16 (MERKPSVCRKSGSWNC) are Cytoplasmic-facing. Residues 17–37 (LLVLFLLLLFTVVSVNFLLYM) traverse the membrane as a helical; Signal-anchor for type II membrane protein segment. The Lumenal portion of the chain corresponds to 38–352 (YIDQMYAPSR…MAVAETREML (315 aa)). A Protein kinase domain is found at 82–352 (VRKLKLVGEG…MAVAETREML (271 aa)).

The protein belongs to the protein kinase superfamily. Ser/Thr protein kinase family. STKL subfamily.

The protein resides in the endoplasmic reticulum membrane. The enzyme catalyses 3-O-[beta-D-GalNAc-(1-&gt;3)-beta-D-GlcNAc-(1-&gt;4)-alpha-D-Man]-L-Thr-[protein] + ATP = 3-O-[beta-D-GalNAc-(1-&gt;3)-beta-D-GlcNAc-(1-&gt;4)-(O-6-P-alpha-D-Man)]-Thr-[protein] + ADP + H(+). In terms of biological role, protein O-mannose kinase that specifically mediates phosphorylation at the 6-position of an O-mannose of the trisaccharide (N-acetylgalactosamine (GalNAc)-beta-1,3-N-acetylglucosamine (GlcNAc)-beta-1,4-mannose) to generate phosphorylated O-mannosyl trisaccharide (N-acetylgalactosamine-beta-1,3-N-acetylglucosamine-beta-1,4-(phosphate-6-)mannose). Phosphorylated O-mannosyl trisaccharide is a carbohydrate structure present in alpha-dystroglycan (dag1), which is required for binding laminin G-like domain-containing extracellular proteins with high affinity. Only shows kinase activity when the GalNAc-beta-3-GlcNAc-beta-terminus is linked to the 4-position of O-mannose, suggesting that this disaccharide serves as the substrate recognition motif. The protein is Protein O-mannose kinase (pomk) of Xenopus laevis (African clawed frog).